We begin with the raw amino-acid sequence, 120 residues long: Large ribosomal subunit protein uL18 (120 aa).

The protein belongs to the universal ribosomal protein uL18 family. In terms of assembly, part of the 50S ribosomal subunit; part of the 5S rRNA/L5/L18/L25 subcomplex. Contacts the 5S and 23S rRNAs.

In terms of biological role, this is one of the proteins that bind and probably mediate the attachment of the 5S RNA into the large ribosomal subunit, where it forms part of the central protuberance. The protein is Large ribosomal subunit protein uL18 of Nitrobacter winogradskyi (strain ATCC 25391 / DSM 10237 / CIP 104748 / NCIMB 11846 / Nb-255).